Consider the following 892-residue polypeptide: Alanine--tRNA ligase (892 aa).

Zn(2+) contacts are provided by His-565, His-569, Cys-678, and His-682. Positions 857–876 (GGKGGGGRPDMAQAGGPDGA) are disordered.

It belongs to the class-II aminoacyl-tRNA synthetase family. Zn(2+) is required as a cofactor.

The protein localises to the cytoplasm. It catalyses the reaction tRNA(Ala) + L-alanine + ATP = L-alanyl-tRNA(Ala) + AMP + diphosphate. Functionally, catalyzes the attachment of alanine to tRNA(Ala) in a two-step reaction: alanine is first activated by ATP to form Ala-AMP and then transferred to the acceptor end of tRNA(Ala). Also edits incorrectly charged Ser-tRNA(Ala) and Gly-tRNA(Ala) via its editing domain. In Bradyrhizobium diazoefficiens (strain JCM 10833 / BCRC 13528 / IAM 13628 / NBRC 14792 / USDA 110), this protein is Alanine--tRNA ligase.